A 640-amino-acid chain; its full sequence is MPTITLPDGSQRSFDQAVSVADVALSIGAGLAKATVAGKVDGKLVDACDLIENDASLQIITPKDQEGLEIIRHSCAHLVGHAVKQLYPTAKMVIGPVIDDGFYYDIAYERPFTPDDMAAIEQRMQQLIEKDYDVIKKVTPRAEVIEVFTARHEDYKLRLVEDMPSEQAMGLYYHEEYVDMCRGPHVPNTRFLKSFKLTKLSGAYWRGDAKNEQLQRVYGTAWADKKQLAAYIQRIEEAEKRDHRKIGKRLGLFHTQEEAPGMVFWHPQGWTLYQVLEQYMRKVQRENGYLEIKTPQVVDRSLWEKSGHWANYADNMFTTESESRDYAIKPMNCPCHVQVFNQGLKSYRELPMRLAEFGACHRNEPSGALHGIMRVRGFTQDDAHIFCTEDQMQAESAAFIKLTLDVYADFGFKDIELKLSTRPEKRVGSDELWDRAESALASALDSAGLPYDLQPGEGAFYGPKIEFSLKDCLGRVWQCGTLQLDFNLPIRLSAEYVSEDNSRKNPVMLHRAILGSFERFIGILIEHYEGAFPAWLAPTQAVIMNITDKQADFALEVEKTLAESGFRAKSDLRNEKIGFKIREHTLLKVPYLLVIGDREVEMQTVAVRTREGADLGSMPVAQFAEFLAQAVSRRGRQDTE.

The region spanning methionine 1–threonine 61 is the TGS domain. The tract at residues aspartate 242 to proline 533 is catalytic. Zn(2+)-binding residues include cysteine 333, histidine 384, and histidine 510.

Belongs to the class-II aminoacyl-tRNA synthetase family. In terms of assembly, homodimer. Requires Zn(2+) as cofactor.

It is found in the cytoplasm. It carries out the reaction tRNA(Thr) + L-threonine + ATP = L-threonyl-tRNA(Thr) + AMP + diphosphate + H(+). Its function is as follows. Catalyzes the attachment of threonine to tRNA(Thr) in a two-step reaction: L-threonine is first activated by ATP to form Thr-AMP and then transferred to the acceptor end of tRNA(Thr). Also edits incorrectly charged L-seryl-tRNA(Thr). This chain is Threonine--tRNA ligase, found in Pseudomonas syringae pv. syringae (strain B728a).